The sequence spans 428 residues: MALRGEGRKRKKGQERRQSSEDDVGNAATDYLVGQVADSLRGGARPPGGGTGRLAALFSTPETLAPPVFVPVPQETSKKRKPDDEEETVAHIKKPALQEPARKVKVKKLSDADKRLANRESALANADLEEIRQDQGQGRRRSQSRGKVTDGEALDVALSLNEDGRQRTKVPLNPEEERLKNERTVFVGNLPVTCNKKKLKSFFKEYGQVESVRFRSVMPAEGTLSKKLAAIKRKFHPDQKSINAYVVFKEERAAAKALQRNGAQIAEGFRIRVDLASETASRDKRSVFVGNLPYRVDESALEEHFLDCGSIVAVRIVRNPLTGVGRGFGYVLFENTDAVHLALKLNNSELMGRKLRVMRSVNKEKLKQQNSNPSVKKDGSKSKQRLNFTSKEGKSHSKNAFIGEKAVLMKKKKGQKKKGQTKKPRKQK.

2 disordered regions span residues 1–106 (MALR…KVKV) and 127–152 (DLEE…TDGE). N6-acetyllysine is present on lysine 147. RRM domains lie at 183-278 (RTVF…LASE) and 285-362 (RSVF…RSVN). A Glycyl lysine isopeptide (Lys-Gly) (interchain with G-Cter in SUMO2) cross-link involves residue lysine 240. Residue serine 286 is modified to Phosphoserine. The disordered stretch occupies residues 361–428 (VNKEKLKQQN…GQTKKPRKQK (68 aa)). The span at 408 to 428 (LMKKKKGQKKKGQTKKPRKQK) shows a compositional bias: basic residues.

This sequence belongs to the RRM RBM34 family.

Its subcellular location is the nucleus. The protein resides in the nucleolus. The polypeptide is RNA-binding protein 34 (Rbm34) (Rattus norvegicus (Rat)).